The following is a 43-amino-acid chain: Large ribosomal subunit protein uL5 (43 aa).

It belongs to the universal ribosomal protein uL5 family. As to quaternary structure, part of the 50S ribosomal subunit; part of the 5S rRNA/L5/L18/L25 subcomplex. Contacts the 5S rRNA and the P site tRNA. Forms a bridge to the 30S subunit in the 70S ribosome.

In terms of biological role, this is one of the proteins that bind and probably mediate the attachment of the 5S RNA into the large ribosomal subunit, where it forms part of the central protuberance. In the 70S ribosome it contacts protein S13 of the 30S subunit (bridge B1b), connecting the 2 subunits; this bridge is implicated in subunit movement. Contacts the P site tRNA; the 5S rRNA and some of its associated proteins might help stabilize positioning of ribosome-bound tRNAs. This chain is Large ribosomal subunit protein uL5 (rplE), found in Serratia marcescens.